The following is a 317-amino-acid chain: D-alanine--D-alanine ligase (317 aa).

The ATP-grasp domain maps to 111 to 308; the sequence is KRFWNGIGIP…YASLVEKIAQ (198 aa). Position 137 to 192 (137 to 192) interacts with ATP; sequence EEQMSYPVIVKPSREGSTIGINKAMNRAELDDALIKALEYDSDILVEEFIDGPEFT. Residues Asp-262, Glu-275, and Asn-277 each coordinate Mg(2+).

It belongs to the D-alanine--D-alanine ligase family. Requires Mg(2+) as cofactor. It depends on Mn(2+) as a cofactor.

The protein localises to the cytoplasm. The catalysed reaction is 2 D-alanine + ATP = D-alanyl-D-alanine + ADP + phosphate + H(+). It participates in cell wall biogenesis; peptidoglycan biosynthesis. Functionally, cell wall formation. In Marinomonas sp. (strain MWYL1), this protein is D-alanine--D-alanine ligase.